The sequence spans 1132 residues: Sentrin-specific protease 6 (1132 aa).

Disordered stretches follow at residues 23–51 (SKRD…DGAN) and 327–388 (LPGG…VPST). Phosphoserine occurs at positions 41, 355, 356, 371, and 373. At Thr-436 the chain carries Phosphothreonine. Lys-648 is covalently cross-linked (Glycyl lysine isopeptide (Lys-Gly) (interchain with G-Cter in SUMO2)). Residues 686 to 1132 (ISVTNEDLHC…QYASASGGSE (447 aa)) form a protease region. Catalysis depends on residues His-785 and Asp-936. Ser-938 carries the phosphoserine modification. Residue Cys-1049 is part of the active site. Ser-1131 carries the phosphoserine modification.

This sequence belongs to the peptidase C48 family. Interacts with RXRA. Forms a complex with KAT5-TIP60 and UBE2I in response to UV irradiation. Interacts with RPA1 to maintain it in hyposumoylated state during S phase preventing DNA repair initiation.

Its subcellular location is the nucleus. It functions in the pathway protein modification; protein sumoylation. Its function is as follows. Protease that deconjugates SUMO1, SUMO2 and SUMO3 from targeted proteins. Processes preferentially poly-SUMO2 and poly-SUMO3 chains, but does not efficiently process SUMO1, SUMO2 and SUMO3 precursors. Deconjugates SUMO1 from RXRA, leading to transcriptional activation. Involved in chromosome alignment and spindle assembly, by regulating the kinetochore CENPH-CENPI-CENPK complex. Desumoylates PML and CENPI, protecting them from degradation by the ubiquitin ligase RNF4, which targets polysumoylated proteins for proteasomal degradation. Also desumoylates RPA1, thus preventing recruitment of RAD51 to the DNA damage foci to initiate DNA repair through homologous recombination. This Mus musculus (Mouse) protein is Sentrin-specific protease 6 (Senp6).